The following is a 217-amino-acid chain: Cytidylate kinase (217 aa).

Residue 21–29 (GPAASGKGT) participates in ATP binding.

The protein belongs to the cytidylate kinase family. Type 1 subfamily.

The protein localises to the cytoplasm. It catalyses the reaction CMP + ATP = CDP + ADP. The catalysed reaction is dCMP + ATP = dCDP + ADP. The chain is Cytidylate kinase from Rickettsia bellii (strain OSU 85-389).